The sequence spans 630 residues: 1-deoxy-D-xylulose-5-phosphate synthase (630 aa).

Residues His87 and 128–130 each bind thiamine diphosphate; that span reads GHS. Mg(2+) is bound at residue Asp159. Thiamine diphosphate contacts are provided by residues 160 to 161, Asn188, Phe295, and Glu377; that span reads GA. A Mg(2+)-binding site is contributed by Asn188.

This sequence belongs to the transketolase family. DXPS subfamily. In terms of assembly, homodimer. Mg(2+) serves as cofactor. It depends on thiamine diphosphate as a cofactor.

The catalysed reaction is D-glyceraldehyde 3-phosphate + pyruvate + H(+) = 1-deoxy-D-xylulose 5-phosphate + CO2. It participates in metabolic intermediate biosynthesis; 1-deoxy-D-xylulose 5-phosphate biosynthesis; 1-deoxy-D-xylulose 5-phosphate from D-glyceraldehyde 3-phosphate and pyruvate: step 1/1. Functionally, catalyzes the acyloin condensation reaction between C atoms 2 and 3 of pyruvate and glyceraldehyde 3-phosphate to yield 1-deoxy-D-xylulose-5-phosphate (DXP). This is 1-deoxy-D-xylulose-5-phosphate synthase from Pseudomonas syringae pv. syringae (strain B728a).